A 1125-amino-acid polypeptide reads, in one-letter code: Exportin-6 (1125 aa).

An N-acetylalanine modification is found at A2. The Importin N-terminal domain maps to 31–97 (IEELLNNFAQ…RSCLPKLLLA (67 aa)). Residue S199 is modified to Phosphoserine. Residues T201 and T204 each carry the phosphothreonine modification. Phosphoserine occurs at positions 208 and 224.

This sequence belongs to the exportin family. Found in a complex with XPO6, Ran, ACTB and PFN1. Interacts with ACTB. Interacts with ACTB in a RanGTP-dependent manner.

Its subcellular location is the nucleus. The protein resides in the cytoplasm. Mediates the nuclear export of actin and profilin-actin complexes in somatic cells. The chain is Exportin-6 (XPO6) from Homo sapiens (Human).